The following is a 136-amino-acid chain: ATP synthase epsilon chain (136 aa).

Residues Asp95 to Gln115 form a disordered region. The span at Ser101–Gln115 shows a compositional bias: basic and acidic residues.

This sequence belongs to the ATPase epsilon chain family. In terms of assembly, F-type ATPases have 2 components, CF(1) - the catalytic core - and CF(0) - the membrane proton channel. CF(1) has five subunits: alpha(3), beta(3), gamma(1), delta(1), epsilon(1). CF(0) has three main subunits: a, b and c.

It localises to the cellular thylakoid membrane. Functionally, produces ATP from ADP in the presence of a proton gradient across the membrane. In Rippkaea orientalis (strain PCC 8801 / RF-1) (Cyanothece sp. (strain PCC 8801)), this protein is ATP synthase epsilon chain.